The primary structure comprises 397 residues: 1-deoxy-D-xylulose 5-phosphate reductoisomerase (397 aa).

NADPH-binding residues include T12, G13, S14, I15, G38, K39, N40, and N126. Position 127 (K127) interacts with 1-deoxy-D-xylulose 5-phosphate. E128 serves as a coordination point for NADPH. D152 contributes to the Mn(2+) binding site. 1-deoxy-D-xylulose 5-phosphate contacts are provided by S153, E154, S188, and H211. Residue E154 participates in Mn(2+) binding. Residue G217 coordinates NADPH. S224, N229, K230, and E233 together coordinate 1-deoxy-D-xylulose 5-phosphate. Position 233 (E233) interacts with Mn(2+).

Belongs to the DXR family. The cofactor is Mg(2+). Requires Mn(2+) as cofactor.

It carries out the reaction 2-C-methyl-D-erythritol 4-phosphate + NADP(+) = 1-deoxy-D-xylulose 5-phosphate + NADPH + H(+). Its pathway is isoprenoid biosynthesis; isopentenyl diphosphate biosynthesis via DXP pathway; isopentenyl diphosphate from 1-deoxy-D-xylulose 5-phosphate: step 1/6. In terms of biological role, catalyzes the NADPH-dependent rearrangement and reduction of 1-deoxy-D-xylulose-5-phosphate (DXP) to 2-C-methyl-D-erythritol 4-phosphate (MEP). This chain is 1-deoxy-D-xylulose 5-phosphate reductoisomerase, found in Haemophilus influenzae (strain PittGG).